The following is a 273-amino-acid chain: MESWKGKYASGLRFSFRKRYSTEKGGTVDEDCEVISIGHKIGDISYVSQEEAQQIDQELFNEYAYSVDQLMELAGHSCAVALAKSYPLTSLKKDATVLVCCGPGNNGGDGLVCARHLKMFGYNPSVFYPKRTDKPLYKNLTIQCEQLDIPFLSHLPKPQLLSDGFSYIVDALFGFSFKGEVRPPFGDVLKTLKEVTVPICSIDVPSGWDVEGGNPDGLQPEFLISLTAPKKCAEKFAGRYHYLGGRFVPPGIIQKYELNLPTYPGTEPCIRLH.

A YjeF N-terminal domain is found at 52–260; that stretch reads AQQIDQELFN…GIIQKYELNL (209 aa). 105-109 contributes to the (6S)-NADPHX binding site; sequence NNGGD. The K(+) site is built by Asn106 and Asp170. (6S)-NADPHX contacts are provided by residues 174–180 and Asp203; that span reads GFSFKGE. Ser206 contacts K(+).

Belongs to the NnrE/AIBP family. Requires K(+) as cofactor.

The enzyme catalyses (6R)-NADHX = (6S)-NADHX. It catalyses the reaction (6R)-NADPHX = (6S)-NADPHX. Functionally, catalyzes the epimerization of the S- and R-forms of NAD(P)HX, a damaged form of NAD(P)H that is a result of enzymatic or heat-dependent hydration. This is a prerequisite for the S-specific NAD(P)H-hydrate dehydratase to allow the repair of both epimers of NAD(P)HX. The protein is NAD(P)H-hydrate epimerase of Branchiostoma floridae (Florida lancelet).